The primary structure comprises 187 residues: uncharacterized protein (187 aa).

An N-terminal signal peptide occupies residues 1–17 (MYAGGRVVRSAFARGKV). The N-palmitoyl cysteine moiety is linked to residue C18. A lipid anchor (S-diacylglycerol cysteine) is attached at C18.

The protein resides in the cell membrane. This is an uncharacterized protein from Treponema pallidum (strain Nichols).